The primary structure comprises 1153 residues: Nitric oxide synthase, inducible (1153 aa).

The DINNN-motif; mediates interaction with SPSB1, SPSB2 and SPSB4 signature appears at 23–27 (DINNN). Positions 110 and 115 each coordinate Zn(2+). S118 provides a ligand contact to (6R)-L-erythro-5,6,7,8-tetrahydrobiopterin. Position 200 (C200) interacts with heme b. S234 carries the phosphoserine; by PKA modification. L-arginine-binding residues include Q263, W372, Y373, and E377. R381, I462, W463, and F476 together coordinate (6R)-L-erythro-5,6,7,8-tetrahydrobiopterin. Y491 is a heme b binding site. A calmodulin-binding region spans residues 515 to 535 (LKVLVKAVLFACMLMRKTMAS). The Flavodoxin-like domain maps to 539–677 (VTILFATETG…AFRSWAVQTF (139 aa)). 5 residues coordinate FMN: T545, E546, T547, K549, and S550. Y575 carries the post-translational modification Phosphotyrosine. S578 bears the Phosphoserine; by PKA mark. FMN contacts are provided by S591, T592, S628, R633, C635, E661, and Q665. Positions 730-970 (KNVFTMRLKS…VRNASGFHLP (241 aa)) constitute an FAD-binding FR-type domain. R750 provides a ligand contact to NADP(+). Residue H772 participates in FAD binding. A Phosphoserine; by PKA modification is found at S892. 5 residues coordinate FAD: R906, Y908, S909, T924, and A926. T929 contacts NADP(+). 4 residues coordinate FAD: Y930, V943, C944, and S945. T984, R1017, S1046, R1047, K1053, Y1055, Q1057, and D1090 together coordinate NADP(+).

This sequence belongs to the NOS family. As to quaternary structure, homodimer. Interacts with NHERF1. Interacts with GAPDH; induced by oxidatively-modified low-densitity lipoprotein (LDL(ox)). Interacts with S100A8 and S100A9 to form the iNOS-S100A8/9 transnitrosylase complex. Interacts with SPSB1, SPSB2 and SPSB4. Interacts with ELOC and CUL5 in the presence of SPSB1 or SPSB2 or SPSB4. Forms a complex with ASL, ASS1 and HSP90AA1; the complex regulates cell-autonomous L-arginine synthesis and citrulline recycling while channeling extracellular L-arginine to nitric oxide synthesis pathway. Requires heme b as cofactor. It depends on FAD as a cofactor. FMN serves as cofactor. The cofactor is (6R)-L-erythro-5,6,7,8-tetrahydrobiopterin. Polyubiquitinated; mediated by SPSB1, SPSB2 and SPSB4, leading to proteasomal degradation. As to expression, expressed in the liver, retina, bone cells and airway epithelial cells of the lung. Not expressed in the platelets. Expressed in chondrocytes.

It localises to the cytoplasm. The protein resides in the cytosol. It carries out the reaction 2 L-arginine + 3 NADPH + 4 O2 + H(+) = 2 L-citrulline + 2 nitric oxide + 3 NADP(+) + 4 H2O. With respect to regulation, regulated by calcium/calmodulin. Aspirin inhibits expression and function of this enzyme and effects may be exerted at the level of translational/post-translational modification and directly on the catalytic activity. In terms of biological role, produces nitric oxide (NO) which is a messenger molecule with diverse functions throughout the body. In macrophages, NO mediates tumoricidal and bactericidal actions. Also has nitrosylase activity and mediates cysteine S-nitrosylation of cytoplasmic target proteins such PTGS2/COX2. As component of the iNOS-S100A8/9 transnitrosylase complex involved in the selective inflammatory stimulus-dependent S-nitrosylation of GAPDH on 'Cys-247' implicated in regulation of the GAIT complex activity and probably multiple targets including ANXA5, EZR, MSN and VIM. Involved in inflammation, enhances the synthesis of pro-inflammatory mediators such as IL6 and IL8. In Homo sapiens (Human), this protein is Nitric oxide synthase, inducible.